The primary structure comprises 367 residues: 3-dehydroquinate synthase (367 aa).

Residues G111–D115, T135–S136, K148, K157, and T175–T178 each bind NAD(+). 3 residues coordinate Zn(2+): E190, H254, and H271.

This sequence belongs to the sugar phosphate cyclases superfamily. Dehydroquinate synthase family. Co(2+) serves as cofactor. Requires Zn(2+) as cofactor. It depends on NAD(+) as a cofactor.

It localises to the cytoplasm. The enzyme catalyses 7-phospho-2-dehydro-3-deoxy-D-arabino-heptonate = 3-dehydroquinate + phosphate. Its pathway is metabolic intermediate biosynthesis; chorismate biosynthesis; chorismate from D-erythrose 4-phosphate and phosphoenolpyruvate: step 2/7. Functionally, catalyzes the conversion of 3-deoxy-D-arabino-heptulosonate 7-phosphate (DAHP) to dehydroquinate (DHQ). The polypeptide is 3-dehydroquinate synthase (Salinibacter ruber (strain DSM 13855 / M31)).